The sequence spans 44 residues: Cytochrome b559 subunit beta (44 aa).

A helical transmembrane segment spans residues 19-35 (WLAIHGLAIPTVFFLGA). Histidine 23 lines the heme pocket.

The protein belongs to the PsbE/PsbF family. Heterodimer of an alpha subunit and a beta subunit. PSII is composed of 1 copy each of membrane proteins PsbA, PsbB, PsbC, PsbD, PsbE, PsbF, PsbH, PsbI, PsbJ, PsbK, PsbL, PsbM, PsbT, PsbX, PsbY, PsbZ, Psb30/Ycf12, at least 3 peripheral proteins of the oxygen-evolving complex and a large number of cofactors. It forms dimeric complexes. Requires heme b as cofactor.

It localises to the plastid. It is found in the chloroplast thylakoid membrane. Functionally, this b-type cytochrome is tightly associated with the reaction center of photosystem II (PSII). PSII is a light-driven water:plastoquinone oxidoreductase that uses light energy to abstract electrons from H(2)O, generating O(2) and a proton gradient subsequently used for ATP formation. It consists of a core antenna complex that captures photons, and an electron transfer chain that converts photonic excitation into a charge separation. This Porphyra purpurea (Red seaweed) protein is Cytochrome b559 subunit beta.